The sequence spans 72 residues: MAKQDVIELEGTVLDTLPNAMFKVELENGHEILAHVSGKIRMNYIRILPGDKVTVEMSPYDLSRGRITYRYK.

One can recognise an S1-like domain in the interval 1–72 (MAKQDVIELE…SRGRITYRYK (72 aa)).

Belongs to the IF-1 family. As to quaternary structure, component of the 30S ribosomal translation pre-initiation complex which assembles on the 30S ribosome in the order IF-2 and IF-3, IF-1 and N-formylmethionyl-tRNA(fMet); mRNA recruitment can occur at any time during PIC assembly.

It is found in the cytoplasm. One of the essential components for the initiation of protein synthesis. Stabilizes the binding of IF-2 and IF-3 on the 30S subunit to which N-formylmethionyl-tRNA(fMet) subsequently binds. Helps modulate mRNA selection, yielding the 30S pre-initiation complex (PIC). Upon addition of the 50S ribosomal subunit IF-1, IF-2 and IF-3 are released leaving the mature 70S translation initiation complex. This chain is Translation initiation factor IF-1, found in Staphylococcus epidermidis (strain ATCC 35984 / DSM 28319 / BCRC 17069 / CCUG 31568 / BM 3577 / RP62A).